Here is a 360-residue protein sequence, read N- to C-terminus: Peptide chain release factor 1 (360 aa).

Gln-237 carries the post-translational modification N5-methylglutamine.

The protein belongs to the prokaryotic/mitochondrial release factor family. In terms of processing, methylated by PrmC. Methylation increases the termination efficiency of RF1.

It localises to the cytoplasm. Peptide chain release factor 1 directs the termination of translation in response to the peptide chain termination codons UAG and UAA. The chain is Peptide chain release factor 1 from Cellvibrio japonicus (strain Ueda107) (Pseudomonas fluorescens subsp. cellulosa).